The sequence spans 439 residues: Trigger factor (439 aa).

The 86-residue stretch at 170 to 255 (GDTVVIDFDG…IHELKKLETP (86 aa)) folds into the PPIase FKBP-type domain.

The protein belongs to the FKBP-type PPIase family. Tig subfamily.

It is found in the cytoplasm. It carries out the reaction [protein]-peptidylproline (omega=180) = [protein]-peptidylproline (omega=0). Functionally, involved in protein export. Acts as a chaperone by maintaining the newly synthesized protein in an open conformation. Functions as a peptidyl-prolyl cis-trans isomerase. In Oenococcus oeni (strain ATCC BAA-331 / PSU-1), this protein is Trigger factor.